A 375-amino-acid chain; its full sequence is Cell division protein ZapE (375 aa).

78-85 serves as a coordination point for ATP; that stretch reads GGVGRGKT.

Belongs to the AFG1 ATPase family. ZapE subfamily. Interacts with FtsZ.

It is found in the cytoplasm. In terms of biological role, reduces the stability of FtsZ polymers in the presence of ATP. This is Cell division protein ZapE from Escherichia coli O157:H7.